Here is a 98-residue protein sequence, read N- to C-terminus: Small ribosomal subunit protein bS16 (98 aa).

It belongs to the bacterial ribosomal protein bS16 family.

This is Small ribosomal subunit protein bS16 from Pseudothermotoga lettingae (strain ATCC BAA-301 / DSM 14385 / NBRC 107922 / TMO) (Thermotoga lettingae).